The chain runs to 103 residues: Small ribosomal subunit protein uS10 (103 aa).

The protein belongs to the universal ribosomal protein uS10 family. In terms of assembly, part of the 30S ribosomal subunit.

Its function is as follows. Involved in the binding of tRNA to the ribosomes. The sequence is that of Small ribosomal subunit protein uS10 from Azotobacter vinelandii (strain DJ / ATCC BAA-1303).